The chain runs to 757 residues: Glutathione biosynthesis bifunctional protein GshAB (757 aa).

A glutamate--cysteine ligase region spans residues 1 to 337 (MNIQQIVKEK…LGRARLGEVA (337 aa)). The ATP-grasp domain maps to 494 to 757 (KKVLAKAGFN…VLGMLFPELV (264 aa)). 521-580 (PLFEGKAVVIKPKSTNFGLGISIFQQGVHDKADFAKAVEIAFREDKEVMVEDYLVGTEYR) is an ATP binding site. 3 residues coordinate Mg(2+): Asp-702, Glu-723, and Asn-725. Residues Asp-702, Glu-723, and Asn-725 each coordinate Mn(2+).

The protein in the N-terminal section; belongs to the glutamate--cysteine ligase type 1 family. Type 2 subfamily. In terms of assembly, monomer. Mg(2+) serves as cofactor. It depends on Mn(2+) as a cofactor.

It catalyses the reaction L-cysteine + L-glutamate + ATP = gamma-L-glutamyl-L-cysteine + ADP + phosphate + H(+). The catalysed reaction is gamma-L-glutamyl-L-cysteine + glycine + ATP = glutathione + ADP + phosphate + H(+). It participates in sulfur metabolism; glutathione biosynthesis; glutathione from L-cysteine and L-glutamate: step 1/2. Its pathway is sulfur metabolism; glutathione biosynthesis; glutathione from L-cysteine and L-glutamate: step 2/2. In terms of biological role, synthesizes glutathione from L-glutamate and L-cysteine via gamma-L-glutamyl-L-cysteine. This Mannheimia succiniciproducens (strain KCTC 0769BP / MBEL55E) protein is Glutathione biosynthesis bifunctional protein GshAB.